The sequence spans 296 residues: Transcription repressor OFP3 (296 aa).

Disordered stretches follow at residues 27–115 (MSRS…SANA) and 131–196 (PSDQ…AHSS). A compositionally biased stretch (polar residues) spans 60–69 (LSSTAHHPQA). Positions 78–88 (SFKRKIKRKTV) are enriched in basic residues. Over residues 92-115 (SSRLKLSTSSSLNHRSKSSSSANA) the composition is skewed to low complexity. The segment covering 136–159 (FVHDPEPHSSIDIKDELSVRKLDD) has biased composition (basic and acidic residues). Positions 228-287 (IVLSSVDPEKDFRESMVEMIMENKMREQKDLEDLLACYLSLNSSEYHDVIIKAFENTWLH) constitute an OVATE domain.

As to quaternary structure, interacts with BLH1, BLH3, KNAT5 and KNAT7.

It localises to the nucleus. Functionally, transcriptional repressor that may regulate multiple aspects of plant growth and development through the regulation of BEL1-LIKE (BLH) and KNOX TALE (KNAT) homeodomain transcription factors. The polypeptide is Transcription repressor OFP3 (OFP3) (Arabidopsis thaliana (Mouse-ear cress)).